Reading from the N-terminus, the 20-residue chain is DFKCPSEWYAYDQHCYRIIN.

Cys4 and Cys15 are joined by a disulfide. The 10-residue stretch at 11 to 20 (YDQHCYRIIN) folds into the C-type lectin domain.

It belongs to the snaclec family. In terms of assembly, heterodimer of subunits alpha and beta; disulfide-linked. Expressed by the venom gland.

The protein localises to the secreted. Binds to the platelet and collagen receptor glycoprotein VI (GP6) and activates platelet aggregation. This Ophiophagus hannah (King cobra) protein is Snaclec ophioluxin subunit alpha.